We begin with the raw amino-acid sequence, 239 residues long: Uridylate kinase (239 aa).

13–16 serves as a coordination point for ATP; it reads KLSG. Residue Gly55 coordinates UMP. ATP is bound by residues Gly56 and Arg60. Residues Asp75 and 136-143 each bind UMP; that span reads TGNPFFTT. 3 residues coordinate ATP: Thr163, Tyr169, and Asp172.

It belongs to the UMP kinase family. In terms of assembly, homohexamer.

It is found in the cytoplasm. The enzyme catalyses UMP + ATP = UDP + ADP. It participates in pyrimidine metabolism; CTP biosynthesis via de novo pathway; UDP from UMP (UMPK route): step 1/1. Its activity is regulated as follows. Inhibited by UTP. Its function is as follows. Catalyzes the reversible phosphorylation of UMP to UDP. This chain is Uridylate kinase, found in Chromobacterium violaceum (strain ATCC 12472 / DSM 30191 / JCM 1249 / CCUG 213 / NBRC 12614 / NCIMB 9131 / NCTC 9757 / MK).